We begin with the raw amino-acid sequence, 597 residues long: Lipoprotein LpqB (597 aa).

The signal sequence occupies residues 1 to 28 (MTPGRRSALLSRSVCGAIVLAVLVTVSG). The N-palmitoyl cysteine moiety is linked to residue cysteine 29. Cysteine 29 is lipidated: S-diacylglycerol cysteine. The segment covering 38–51 (PQAIGTINRDSPGS) has biased composition (polar residues). Residues 38 to 58 (PQAIGTINRDSPGSSVAAPAP) are disordered.

This sequence belongs to the LpqB lipoprotein family.

Its subcellular location is the cell membrane. The chain is Lipoprotein LpqB from Rhodococcus jostii (strain RHA1).